The chain runs to 124 residues: Small ribosomal subunit protein uS12 (124 aa).

Asp-89 bears the 3-methylthioaspartic acid mark.

It belongs to the universal ribosomal protein uS12 family. As to quaternary structure, part of the 30S ribosomal subunit. Contacts proteins S8 and S17. May interact with IF1 in the 30S initiation complex.

Its function is as follows. With S4 and S5 plays an important role in translational accuracy. In terms of biological role, interacts with and stabilizes bases of the 16S rRNA that are involved in tRNA selection in the A site and with the mRNA backbone. Located at the interface of the 30S and 50S subunits, it traverses the body of the 30S subunit contacting proteins on the other side and probably holding the rRNA structure together. The combined cluster of proteins S8, S12 and S17 appears to hold together the shoulder and platform of the 30S subunit. The protein is Small ribosomal subunit protein uS12 of Moorella thermoacetica (strain ATCC 39073 / JCM 9320).